Reading from the N-terminus, the 1461-residue chain is A disintegrin and metalloproteinase with thrombospondin motifs adt-1 (1461 aa).

The signal sequence occupies residues 1 to 21; the sequence is MPPFYIVITFLLSTVFRISQS. Positions 22 to 163 are excised as a propeptide; that stretch reads VHHHLNEEEL…HLQKERHLVY (142 aa). Residue Asn69 is glycosylated (N-linked (GlcNAc...) asparagine). The Cysteine switch signature appears at 190–197; it reads SFCDTSEQ. Asn212 is a glycosylation site (N-linked (GlcNAc...) asparagine). In terms of domain architecture, Peptidase M12B spans 233–435; it reads ITLEIGLFLD…CSVREFNAFL (203 aa). His388 is a Zn(2+) binding site. Residue Glu389 is part of the active site. Zn(2+) contacts are provided by His392 and His398. A disulfide bond links Cys405 and Cys410. Residues 464-546 form the Disintegrin domain; sequence RLPGQRFTAD…TFGLTPVPID (83 aa). 13 consecutive TSP type-1 domains span residues 708–759, 761–802, 804–852, 853–898, 903–952, 955–1000, 1035–1083, 1087–1133, 1148–1200, 1203–1260, 1265–1321, 1324–1378, and 1382–1435; these read HQWE…RDCE, FGEW…RPCD, EGCW…QKCI, SQSW…QQCP, LSVW…GPCE, YLTW…IACL, SIHS…NSCL, IWSD…PSCS, APRW…GSCS, AGGW…NVCS, DGGW…ARCH, DGGW…PACD, and DGEW…RQSP. 3 disulfides stabilise this stretch: Cys719–Cys751, Cys723–Cys758, and Cys735–Cys741. 6 disulfides stabilise this stretch: Cys816-Cys846, Cys820-Cys851, Cys831-Cys836, Cys862-Cys892, Cys866-Cys897, and Cys877-Cys882. Cystine bridges form between Cys1047–Cys1077, Cys1051–Cys1082, and Cys1062–Cys1067. Cystine bridges form between Cys1160–Cys1194, Cys1162–Cys1199, Cys1173–Cys1184, Cys1215–Cys1253, Cys1219–Cys1259, Cys1231–Cys1243, Cys1277–Cys1314, Cys1281–Cys1320, Cys1292–Cys1304, Cys1336–Cys1372, Cys1340–Cys1377, and Cys1351–Cys1362.

It depends on Zn(2+) as a cofactor. In hermaphrodites, expressed in the vulva, head ganglia, ventral nerve cord and amphid neurons. Expressed in the rays of the male tail.

The protein resides in the secreted. In terms of biological role, plays a role in ray morphogenesis in the male tail, probably by remodeling the extracellular matrix (ECM) in the cuticle. This Caenorhabditis elegans protein is A disintegrin and metalloproteinase with thrombospondin motifs adt-1.